The sequence spans 313 residues: Glutathione synthetase (313 aa).

The ATP-grasp domain occupies K125 to E309. Position 151 to 207 (R151 to G207) interacts with ATP. Residues E280 and N282 each coordinate Mg(2+).

Belongs to the prokaryotic GSH synthase family. It depends on Mg(2+) as a cofactor. Requires Mn(2+) as cofactor.

The enzyme catalyses gamma-L-glutamyl-L-cysteine + glycine + ATP = glutathione + ADP + phosphate + H(+). It participates in sulfur metabolism; glutathione biosynthesis; glutathione from L-cysteine and L-glutamate: step 2/2. The chain is Glutathione synthetase from Mesorhizobium japonicum (strain LMG 29417 / CECT 9101 / MAFF 303099) (Mesorhizobium loti (strain MAFF 303099)).